A 303-amino-acid chain; its full sequence is Phospholipase A1 2 (303 aa).

The cysteines at positions 6 and 90 are disulfide-linked. Serine 140 functions as the Nucleophile in the catalytic mechanism. Aspartate 168 (charge relay system) is an active-site residue. A disulfide bond links cysteine 179 and cysteine 184. The active-site Charge relay system is the histidine 232. Intrachain disulfides connect cysteine 247–cysteine 271, cysteine 248–cysteine 296, and cysteine 264–cysteine 269.

It belongs to the AB hydrolase superfamily. Lipase family. As to expression, expressed by the venom gland.

It localises to the secreted. The enzyme catalyses a 1,2-diacyl-sn-glycero-3-phosphocholine + H2O = a 2-acyl-sn-glycero-3-phosphocholine + a fatty acid + H(+). Catalyzes the hydrolysis of phosphatidylcholine with phospholipase A1 activity. May act as an allergen and induce hemolytic activity. This chain is Phospholipase A1 2, found in Dolichovespula maculata (Bald-faced hornet).